Reading from the N-terminus, the 55-residue chain is Glycine-rich antimicrobial peptide Pg-AMP (55 aa).

A compositionally biased stretch (gly residues) spans 18 to 39; it reads GYGGYGGGRYGGGYGSGRGQPV. Residues 18–55 are disordered; that stretch reads GYGGYGGGRYGGGYGSGRGQPVGQGVERSHDDNRNQPR. Residues 44-55 show a composition bias toward basic and acidic residues; that stretch reads ERSHDDNRNQPR.

Monomer and homodimer. Might act by homodimer formation.

Has antibacterial activity against the Gram-negative bacteria Klebsiella sp., Proteus sp., E.coli ATCC 8739 (MIC=72 ug/ml) and K.pneumoniae (MIC=32 ug/ml). Has no activity against the Gram-negative bacterium S.typhimurium or the Gram-positive bacterium S.aureus. Does not have antifungal activity against the human and plant pathogenic fungi F.oxysporum, A.fumigatus and R.solani. The sequence is that of Glycine-rich antimicrobial peptide Pg-AMP from Psidium guajava (Guava).